A 191-amino-acid chain; its full sequence is Holliday junction branch migration complex subunit RuvA (191 aa).

The domain I stretch occupies residues 1-64 (MIGRLTGTLA…EDAQLLYGFL (64 aa)). The segment at 65–138 (TATERATFRQ…KGKLGPDLAL (74 aa)) is domain II. Residues 138–142 (LPGAV) form a flexible linker region. A domain III region spans residues 143 to 191 (IRNEAQSDIVQALIALGYNEREAAAAIKPLPADVGVSDGIKLALRALGK).

Belongs to the RuvA family. Homotetramer. Forms an RuvA(8)-RuvB(12)-Holliday junction (HJ) complex. HJ DNA is sandwiched between 2 RuvA tetramers; dsDNA enters through RuvA and exits via RuvB. An RuvB hexamer assembles on each DNA strand where it exits the tetramer. Each RuvB hexamer is contacted by two RuvA subunits (via domain III) on 2 adjacent RuvB subunits; this complex drives branch migration. In the full resolvosome a probable DNA-RuvA(4)-RuvB(12)-RuvC(2) complex forms which resolves the HJ.

The protein resides in the cytoplasm. Its function is as follows. The RuvA-RuvB-RuvC complex processes Holliday junction (HJ) DNA during genetic recombination and DNA repair, while the RuvA-RuvB complex plays an important role in the rescue of blocked DNA replication forks via replication fork reversal (RFR). RuvA specifically binds to HJ cruciform DNA, conferring on it an open structure. The RuvB hexamer acts as an ATP-dependent pump, pulling dsDNA into and through the RuvAB complex. HJ branch migration allows RuvC to scan DNA until it finds its consensus sequence, where it cleaves and resolves the cruciform DNA. This is Holliday junction branch migration complex subunit RuvA from Leptothrix cholodnii (strain ATCC 51168 / LMG 8142 / SP-6) (Leptothrix discophora (strain SP-6)).